Consider the following 1101-residue polypeptide: MKSRQKGKKKGSSKERVFGCDLREHLQHSGQEVPQVLRSCAEFVQEYGVVDGIYRLSGVSSNIQKLRQEFETERKPDLRRDVYLQDIHCVSSLCKAYFRELPDPLLTYRLYDKFAEAVAVQLEPERLVKILEVLQELPIQNYRTLEFLMRHLVHMASFSAQTNMHARNLAIVWAPNLLRSKDIEASGFNGTAAFMEVRVQSIVVEFILTHVDQLFRGDSLSAGVDLESGWKSLPGARASGSSEDLMPTSLPYHLPSILQAGDGPPQIRPYHTIIEIAEHKRKGSLKVRKWRSIFNLGRSGHETKRKLPLRVEDREEKSSKGTLRPAKSMDSLSAAAGASDEPEGLVGSSSSQPSSLMPESLESNSMEGEQEPEAEAPGSANSEPGTPRAGRSAVRALGSSRAERCAGVHISDPYNVNLPLHITSILSVPPNIISNVSLVRLTRGLECPALQPRPSPALGPGPPGSVGPLASDEKSEARSVPGPLDDSSPAAMTPALEDSLSQEVQDSFSFLEDLSSSEPEWVGVEEREVAKAEAAGAAGAAAFSLGEDDPGMGYLEELLRVGPQVEEFSVEPPLDDLSLDDTQYVLAPNCCSLDSAVSTPDVEEDYGEEVFLSAYDDLSPLLGPKPINWEGVGSLEEEAAGCGKQPPTQDEEEQACSETRQEKEAKPRSTSDNREEAEATPETEMEAGKADAEGGEAERSQKVMDSFKEGSREELEAKEENSEGREVESIKETKDVEKIIGEPGKDEEREIGREEGAEKGDDTPVDSDMDPEHVFQEDLVLEESWEVVHKHEAEKGRESETKELRRKSDLKSREDQGHSEDSGSPEEGDDRKEGVFSKEQKSIDVETEVMRGVGDHLEEGALSEGPGVELLRVDSTEEINEQTSEMKQAPLQPSEPEGMEAEGQLNPETCDLYSCPCGSAGGVGMRLASTLVQVRQVRSVPVVPPKPQFAKMPSAMCSKIHVAPASPCPRPGRLDGTPGEKAWGSRASWRNGGSLSFDAAVALARERQRTESQGVLRTQTCTGGGDYSLSSRTPPCSMILAHSSRPLSCLERPPEGTEGSEPRSRLSLPPRELHPVVPLVAPQRQTYAFETQTNHGKDEGV.

In terms of domain architecture, Rho-GAP spans 20-215 (CDLREHLQHS…FILTHVDQLF (196 aa)). Disordered stretches follow at residues 305–397 (RKLP…VRAL) and 450–499 (LQPR…LEDS). The span at 309 to 319 (LRVEDREEKSS) shows a compositional bias: basic and acidic residues. A compositionally biased stretch (low complexity) spans 348–367 (SSSSQPSSLMPESLESNSME). The span at 451 to 465 (QPRPSPALGPGPPGS) shows a compositional bias: pro residues. Serine 578 is modified (phosphoserine). Residues 622–848 (LGPKPINWEG…EQKSIDVETE (227 aa)) form a disordered region. Composition is skewed to basic and acidic residues over residues 659–677 (TRQE…REEA), 686–762 (EAGK…KGDD), 786–821 (EVVH…HSED), and 829–844 (DDRK…KSID). Residue serine 875 is modified to Phosphoserine. Disordered stretches follow at residues 878-901 (EINE…GMEA) and 968-987 (CPRP…GSRA). Serine 996 bears the Phosphoserine mark. Residues 1044 to 1076 (SRPLSCLERPPEGTEGSEPRSRLSLPPRELHPV) form a disordered region. The segment covering 1052–1064 (RPPEGTEGSEPRS) has biased composition (basic and acidic residues).

As to quaternary structure, interacts with RHOU in a GTP-independent manner.

Its subcellular location is the cytoplasmic vesicle. Functionally, GTPase-activating protein (GAP) for RAC1 and RHOA, but not for CDC42. This Mus musculus (Mouse) protein is Rho GTPase-activating protein 30 (Arhgap30).